A 157-amino-acid chain; its full sequence is Endoribonuclease YbeY (157 aa).

Zn(2+) is bound by residues His116, His120, and His126.

It belongs to the endoribonuclease YbeY family. Zn(2+) serves as cofactor.

The protein localises to the cytoplasm. In terms of biological role, single strand-specific metallo-endoribonuclease involved in late-stage 70S ribosome quality control and in maturation of the 3' terminus of the 16S rRNA. The polypeptide is Endoribonuclease YbeY (Renibacterium salmoninarum (strain ATCC 33209 / DSM 20767 / JCM 11484 / NBRC 15589 / NCIMB 2235)).